A 150-amino-acid polypeptide reads, in one-letter code: Urease accessory protein UreE (150 aa).

Belongs to the UreE family.

The protein resides in the cytoplasm. Functionally, involved in urease metallocenter assembly. Binds nickel. Probably functions as a nickel donor during metallocenter assembly. In Staphylococcus aureus (strain Mu3 / ATCC 700698), this protein is Urease accessory protein UreE.